A 386-amino-acid chain; its full sequence is DNA methyltransferase CcrM (386 aa).

Positions 280 to 382 (LGKAELTVMT…LRKIIREQMA (103 aa)) constitute an RAMA domain.

The protein belongs to the N(4)/N(6)-methyltransferase family.

The enzyme catalyses a 2'-deoxyadenosine in DNA + S-adenosyl-L-methionine = an N(6)-methyl-2'-deoxyadenosine in DNA + S-adenosyl-L-homocysteine + H(+). In terms of biological role, a beta subtype methylase that recognizes the double-stranded sequence 5'-GANTC-3' and methylates A-2 on both strands. CcrM-mediated methylation has important cellular functions. Contributes to the accurate cell-cycle control of DNA replication and cellular morphology. The chain is DNA methyltransferase CcrM (ccrM) from Brucella ovis (strain ATCC 25840 / 63/290 / NCTC 10512).